A 467-amino-acid chain; its full sequence is Ribosomal RNA small subunit methyltransferase F (467 aa).

Residues 119-125 (ASAPGSK), E143, D170, and D188 contribute to the S-adenosyl-L-methionine site. C241 functions as the Nucleophile in the catalytic mechanism.

This sequence belongs to the class I-like SAM-binding methyltransferase superfamily. RsmB/NOP family.

The protein resides in the cytoplasm. It carries out the reaction cytidine(1407) in 16S rRNA + S-adenosyl-L-methionine = 5-methylcytidine(1407) in 16S rRNA + S-adenosyl-L-homocysteine + H(+). Its function is as follows. Specifically methylates the cytosine at position 1407 (m5C1407) of 16S rRNA. This chain is Ribosomal RNA small subunit methyltransferase F, found in Shewanella amazonensis (strain ATCC BAA-1098 / SB2B).